Reading from the N-terminus, the 196-residue chain is Putative lipopolysaccharide biosynthesis O-acetyl transferase WbbJ (196 aa).

It belongs to the transferase hexapeptide repeat family.

Its pathway is bacterial outer membrane biogenesis; lipopolysaccharide biosynthesis. Putative O-acetyltransferase that transfers an O-acetyl group to the O antigen. The polypeptide is Putative lipopolysaccharide biosynthesis O-acetyl transferase WbbJ (wbbJ) (Escherichia coli (strain K12)).